A 958-amino-acid polypeptide reads, in one-letter code: Probable protein phosphatase DDB_G0282105 (958 aa).

2 helical membrane passes run Val-2 to Val-22 and Phe-26 to Phe-46. Positions Ser-142–Ser-330 form a coiled coil. Basic and acidic residues predominate over residues Gln-312–Ser-328. 5 disordered regions span residues Gln-312–Ile-361, Ser-380–Lys-421, His-445–Ile-475, Ile-491–Pro-525, and Asn-619–Lys-659. Composition is skewed to low complexity over residues Ser-329–Ile-361, Ser-390–Arg-401, Thr-452–Ile-475, Ile-491–Ser-515, and Asn-619–Lys-655. Positions Asn-613–Glu-666 form a coiled coil. The PPM-type phosphatase domain maps to Lys-675–Leu-958. Residues Asp-722, Gly-723, Asp-905, and Asp-949 each coordinate Mn(2+).

This sequence in the C-terminal section; belongs to the PP2C family. Mg(2+) is required as a cofactor. Requires Mn(2+) as cofactor.

The protein localises to the membrane. It carries out the reaction O-phospho-L-seryl-[protein] + H2O = L-seryl-[protein] + phosphate. The catalysed reaction is O-phospho-L-threonyl-[protein] + H2O = L-threonyl-[protein] + phosphate. This is Probable protein phosphatase DDB_G0282105 from Dictyostelium discoideum (Social amoeba).